The sequence spans 397 residues: Acetate kinase (397 aa).

Residue Asn-7 coordinates Mg(2+). Lys-14 lines the ATP pocket. Arg-90 provides a ligand contact to substrate. The Proton donor/acceptor role is filled by Asp-147. ATP is bound by residues 207 to 211 (HLGNG), 282 to 284 (DFR), and 330 to 334 (GLGEN). Glu-383 serves as a coordination point for Mg(2+).

This sequence belongs to the acetokinase family. Homodimer. The cofactor is Mg(2+). Requires Mn(2+) as cofactor.

It is found in the cytoplasm. It carries out the reaction acetate + ATP = acetyl phosphate + ADP. Its pathway is metabolic intermediate biosynthesis; acetyl-CoA biosynthesis; acetyl-CoA from acetate: step 1/2. In terms of biological role, catalyzes the formation of acetyl phosphate from acetate and ATP. Can also catalyze the reverse reaction. This is Acetate kinase from Clostridium botulinum (strain Okra / Type B1).